The primary structure comprises 168 residues: Photosystem I assembly protein Ycf3 (168 aa).

TPR repeat units follow at residues 35-68 (AFTYYRDGISAQSEGNYAEALQNYYEAMRLEIDP), 72-105 (SYILYNIGLIHTSNGEHTKALEYYFRALERNSFL), and 120-153 (GEQAIRQGDSEIAEAWFDQAAEYWKQAIALTPGN).

It belongs to the Ycf3 family.

It localises to the plastid. The protein localises to the chloroplast thylakoid membrane. Essential for the assembly of the photosystem I (PSI) complex. May act as a chaperone-like factor to guide the assembly of the PSI subunits. The sequence is that of Photosystem I assembly protein Ycf3 from Jasminum nudiflorum (Winter jasmine).